The following is a 286-amino-acid chain: Deleted in azoospermia-like-B (286 aa).

Residues 33–114 (NTVFVGGIDI…PAIRKICTYV (82 aa)) enclose the RRM domain. A DAZ domain is found at 155 to 180 (ACPYPSSPPMAIQQIPVGCQQPGYFQ).

It belongs to the RRM DAZ family. In terms of assembly, interacts with the C-terminus of pabp1 and with epabp. Prior to oocyte maturation, found in a complex with epabp and pum2 proteins and spdy1 mRNA; pum2 dissociates from the complex during maturation.

The protein resides in the cytoplasm. RNA-binding protein that is required for primordial germ cell (PGC) differentiation and indirectly necessary for the migration of PGCs through the endoderm. May promote meiotic cell division during spermatogenesis. Shows a preference for G- and U-rich RNAs and probably binds the 3'-UTR of target mRNAs. Stimulates the initiation of translation of mRNAs through the recruitment of poly(A)-binding proteins (PABPs). The chain is Deleted in azoospermia-like-B (dazl-b) from Xenopus laevis (African clawed frog).